A 338-amino-acid polypeptide reads, in one-letter code: UDP-3-O-acylglucosamine N-acyltransferase (338 aa).

Catalysis depends on histidine 243, which acts as the Proton acceptor.

This sequence belongs to the transferase hexapeptide repeat family. LpxD subfamily. In terms of assembly, homotrimer.

It carries out the reaction a UDP-3-O-[(3R)-3-hydroxyacyl]-alpha-D-glucosamine + a (3R)-hydroxyacyl-[ACP] = a UDP-2-N,3-O-bis[(3R)-3-hydroxyacyl]-alpha-D-glucosamine + holo-[ACP] + H(+). Its pathway is bacterial outer membrane biogenesis; LPS lipid A biosynthesis. Functionally, catalyzes the N-acylation of UDP-3-O-acylglucosamine using 3-hydroxyacyl-ACP as the acyl donor. Is involved in the biosynthesis of lipid A, a phosphorylated glycolipid that anchors the lipopolysaccharide to the outer membrane of the cell. This is UDP-3-O-acylglucosamine N-acyltransferase from Amoebophilus asiaticus (strain 5a2).